We begin with the raw amino-acid sequence, 156 residues long: MKCPYCGHLDNKVIDSRINKDATITRRRRSCLACDQRFTTYERLEVMFPMLVKKDGRREAWDRHKLVVGIEKACEKRAVSRDKIDEFVDDIEHMLQDYGAKEISSSIVGEWVMERLPALDEVAYVRFASVYRQFKDVDEFMSELKNLLDARGGGDD.

Residues 3–34 fold into a zinc finger; sequence CPYCGHLDNKVIDSRINKDATITRRRRSCLAC. The region spanning 49-139 is the ATP-cone domain; the sequence is PMLVKKDGRR…VYRQFKDVDE (91 aa).

This sequence belongs to the NrdR family. It depends on Zn(2+) as a cofactor.

In terms of biological role, negatively regulates transcription of bacterial ribonucleotide reductase nrd genes and operons by binding to NrdR-boxes. This is Transcriptional repressor NrdR from Desulfotalea psychrophila (strain LSv54 / DSM 12343).